The sequence spans 124 residues: Small ribosomal subunit protein uS13 (124 aa).

A compositionally biased stretch (basic residues) spans 93–117 (KNLPVRGQRTRTNARTRKGPRKTVA). The segment at 93–124 (KNLPVRGQRTRTNARTRKGPRKTVANKKIESK) is disordered.

It belongs to the universal ribosomal protein uS13 family. In terms of assembly, part of the 30S ribosomal subunit. Forms a loose heterodimer with protein S19. Forms two bridges to the 50S subunit in the 70S ribosome.

Functionally, located at the top of the head of the 30S subunit, it contacts several helices of the 16S rRNA. In the 70S ribosome it contacts the 23S rRNA (bridge B1a) and protein L5 of the 50S subunit (bridge B1b), connecting the 2 subunits; these bridges are implicated in subunit movement. Contacts the tRNAs in the A and P-sites. This is Small ribosomal subunit protein uS13 from Mycoplasma genitalium (strain ATCC 33530 / DSM 19775 / NCTC 10195 / G37) (Mycoplasmoides genitalium).